The following is a 105-amino-acid chain: Putative membrane protein insertion efficiency factor (105 aa).

The protein belongs to the UPF0161 family.

It localises to the cell inner membrane. Its function is as follows. Could be involved in insertion of integral membrane proteins into the membrane. The chain is Putative membrane protein insertion efficiency factor from Nitratidesulfovibrio vulgaris (strain DSM 19637 / Miyazaki F) (Desulfovibrio vulgaris).